The sequence spans 737 residues: Phosphoribosylformylglycinamidine synthase subunit PurL (737 aa).

H48 is a catalytic residue. Y51 and K90 together coordinate ATP. E92 contributes to the Mg(2+) binding site. Substrate-binding positions include 93-96 (SHNH) and R115. H94 acts as the Proton acceptor in catalysis. D116 serves as a coordination point for Mg(2+). Residue Q244 participates in substrate binding. Residue D272 coordinates Mg(2+). A substrate-binding site is contributed by 316-318 (ESQ). Residues D500 and G537 each contribute to the ATP site. N538 provides a ligand contact to Mg(2+). S540 serves as a coordination point for substrate.

This sequence belongs to the FGAMS family. In terms of assembly, monomer. Part of the FGAM synthase complex composed of 1 PurL, 1 PurQ and 2 PurS subunits.

The protein resides in the cytoplasm. The enzyme catalyses N(2)-formyl-N(1)-(5-phospho-beta-D-ribosyl)glycinamide + L-glutamine + ATP + H2O = 2-formamido-N(1)-(5-O-phospho-beta-D-ribosyl)acetamidine + L-glutamate + ADP + phosphate + H(+). Its pathway is purine metabolism; IMP biosynthesis via de novo pathway; 5-amino-1-(5-phospho-D-ribosyl)imidazole from N(2)-formyl-N(1)-(5-phospho-D-ribosyl)glycinamide: step 1/2. Part of the phosphoribosylformylglycinamidine synthase complex involved in the purines biosynthetic pathway. Catalyzes the ATP-dependent conversion of formylglycinamide ribonucleotide (FGAR) and glutamine to yield formylglycinamidine ribonucleotide (FGAM) and glutamate. The FGAM synthase complex is composed of three subunits. PurQ produces an ammonia molecule by converting glutamine to glutamate. PurL transfers the ammonia molecule to FGAR to form FGAM in an ATP-dependent manner. PurS interacts with PurQ and PurL and is thought to assist in the transfer of the ammonia molecule from PurQ to PurL. This Sulfurimonas denitrificans (strain ATCC 33889 / DSM 1251) (Thiomicrospira denitrificans (strain ATCC 33889 / DSM 1251)) protein is Phosphoribosylformylglycinamidine synthase subunit PurL.